The primary structure comprises 142 residues: Calmodulin-alpha (142 aa).

Position 2 is an N-acetylalanine (A2). 4 consecutive EF-hand domains span residues 8–43, 44–79, 81–116, and 117–142; these read EQIA…LGQN, PTEA…KMKD, DSEE…LGEK, and LTDE…YEEF. The Ca(2+) site is built by D21, D23, D25, T27, E32, D57, D59, N61, T63, E68, D94, D96, N98, Y100, and E105. At K116 the chain carries N6,N6,N6-trimethyllysine. Ca(2+)-binding residues include D130, D132, D134, Q136, and E141.

It belongs to the calmodulin family.

Its function is as follows. Calmodulin mediates the control of a large number of enzymes, ion channels and other proteins by Ca(2+). Among the enzymes to be stimulated by the calmodulin-Ca(2+) complex are a number of protein kinases and phosphatases. The protein is Calmodulin-alpha of Arbacia punctulata (Punctuate sea urchin).